A 372-amino-acid polypeptide reads, in one-letter code: MPNQHMLMLFNMLPVGSNISTWWNFGSMLLTCSALQTITGFFLAIHYTANINLAFSSVIHITRDVPYGWIMQNLHAIGASMFFICIYIHIARGLYYGSYLNKNVWLSGTILLFILMATAFFGYVLPWGQMSFWAATVITNLLTAVPYIGTTLTNWLWGGFSINDPTLTRFFALHFILPFTIISLSSIHIMLLHTEGSSNPLGTNSDIDKIPFHPYHTHKDILVLTIMLTTMFIIMTLTPNIFNYPENFSKANPLVTPQHIKPEWYFLFAYGILRSIPNKLGGTVALVLSVAILLTTPFTHTSHMRSMTFRPLTQLMFWTLVATFITITWAATKPVEPPFTMIGQMTSLLYFSFFIMNPLLGWLENKISFTNT.

A run of 4 helical transmembrane segments spans residues 25 to 45, 69 to 90, 105 to 125, and 170 to 190; these read FGSMLLTCSALQTITGFFLAI, WIMQNLHAIGASMFFICIYIHI, WLSGTILLFILMATAFFGYVL, and FFALHFILPFTIISLSSIHIM. Heme b is bound by residues histidine 75 and histidine 89. Heme b-binding residues include histidine 174 and histidine 188. Residue histidine 193 participates in a ubiquinone binding. Transmembrane regions (helical) follow at residues 218–238, 280–300, 312–332, and 339–358; these read HKDILVLTIMLTTMFIIMTLT, LGGTVALVLSVAILLTTPFTH, LTQLMFWTLVATFITITWAAT, and FTMIGQMTSLLYFSFFIMNP.

Belongs to the cytochrome b family. As to quaternary structure, the cytochrome bc1 complex contains 3 respiratory subunits (MT-CYB, CYC1 and UQCRFS1), 2 core proteins (UQCRC1 and UQCRC2) and probably 6 low-molecular weight proteins. It depends on heme b as a cofactor.

Its subcellular location is the mitochondrion inner membrane. Component of the ubiquinol-cytochrome c reductase complex (complex III or cytochrome b-c1 complex) that is part of the mitochondrial respiratory chain. The b-c1 complex mediates electron transfer from ubiquinol to cytochrome c. Contributes to the generation of a proton gradient across the mitochondrial membrane that is then used for ATP synthesis. This Lycodon semicarinatus (Ryukyu odd-tooth snake) protein is Cytochrome b (MT-CYB).